Reading from the N-terminus, the 434-residue chain is Eukaryotic translation initiation factor 3 subunit E (434 aa).

A PCI domain is found at 219–392 (FFNHPKGRDL…GHVVMGTQPL (174 aa)).

This sequence belongs to the eIF-3 subunit E family. In terms of assembly, component of the eukaryotic translation initiation factor 3 (eIF-3) complex. The eIF-3 complex interacts with pix. Interacts with mxt.

It localises to the cytoplasm. Its function is as follows. Component of the eukaryotic translation initiation factor 3 (eIF-3) complex, which is involved in protein synthesis of a specialized repertoire of mRNAs and, together with other initiation factors, stimulates binding of mRNA and methionyl-tRNAi to the 40S ribosome. The eIF-3 complex specifically targets and initiates translation of a subset of mRNAs involved in cell proliferation. The sequence is that of Eukaryotic translation initiation factor 3 subunit E (eIF3-S6) from Drosophila persimilis (Fruit fly).